The chain runs to 484 residues: Neuronal acetylcholine receptor subunit alpha-9 (484 aa).

The N-terminal stretch at Met-1–Ser-27 is a signal peptide. Over Ala-28 to Ser-240 the chain is Extracellular. Residue Asn-59 is glycosylated (N-linked (GlcNAc...) asparagine). Cys-157 and Cys-171 are oxidised to a cystine. Asn-172 is a glycosylation site (N-linked (GlcNAc...) asparagine). Na(+) is bound by residues Ser-193 and Asp-195. The cysteines at positions 221 and 222 are disulfide-linked. 3 helical membrane-spanning segments follow: residues Phe-241–Phe-261, Val-271–Ile-291, and Tyr-305–Val-325. The Cytoplasmic portion of the chain corresponds to His-326–Arg-462. Positions Arg-364–Ser-395 are disordered. Residues Phe-463–Ala-483 traverse the membrane as a helical segment.

The protein belongs to the ligand-gated ion channel (TC 1.A.9) family. Acetylcholine receptor (TC 1.A.9.1) subfamily. Alpha-9/CHRNA9 sub-subfamily. In terms of assembly, forms homo- or heteropentameric channels in conjunction with CHRNA10. The native outer hair cell receptor is composed of CHRNA9:CHRNA10 heterooligomers. Found in the stoichiometric form (CHRNA9)2:(CHRNA10)3. As to expression, expressed in hair cells of the cochlea (at protein level). Expressed in hair cells of the cochlea.

The protein localises to the synaptic cell membrane. Its subcellular location is the cell membrane. The catalysed reaction is Ca(2+)(in) = Ca(2+)(out). It catalyses the reaction K(+)(in) = K(+)(out). The enzyme catalyses Na(+)(in) = Na(+)(out). It carries out the reaction Mg(2+)(in) = Mg(2+)(out). Its activity is regulated as follows. Activated by a myriad of ligands such as acetylcholine. AChR activity is inhibited by the antagonist alpha-conotoxins RgIA and GeXXA, small disulfide-constrained peptides from cone snails. In terms of biological role, component of neuronal acetylcholine receptors (nAChRs) that function as pentameric, ligand-gated cation channels with high calcium permeability among other activities. nAChRs are excitatory neurotrasnmitter receptors formed by a collection of nAChR subunits known to mediate synaptic transmission in the nervous system and the neuromuscular junction. Each nAchR subunit confers differential attributes to channel properties, including activation, deactivation and desensitization kinetics, pH sensitivity, cation permeability, and binding to allosteric modulators. Forms either homopentamers or heteropentamers with CHRNA10. Expressed in the inner ear, in sympathetic neurons and in other non-neuronal cells, such as skin keratinocytes and lymphocytes. The channel is permeable to a range of divalent cations including calcium, the influx of which may activate a potassium current which hyperpolarizes the cell membrane. This Gallus gallus (Chicken) protein is Neuronal acetylcholine receptor subunit alpha-9 (CHRNA9).